Reading from the N-terminus, the 344-residue chain is uncharacterized protein (344 aa).

Topologically, residues 1-98 are cytoplasmic; that stretch reads MIDFVKSRDT…NNDEIGIWNY (98 aa). A helical membrane pass occupies residues 99 to 119; that stretch reads ISVAEMGGVLLFLSYWIWTCL. A topological domain (lumenal) is located at residue His120. The chain crosses the membrane as a helical span at residues 121-141; it reads FSKIIFPAQKVICLYIFLFAL. Residues 142-198 lie on the Cytoplasmic side of the membrane; that stretch reads NQTLQECIEEYVFSSECIKYRQFYSVYEIIDFLRTNFYRLFVIYCALGFGITRTVPK. The chain crosses the membrane as a helical span at residues 199–219; sequence YLMIKGISIVIALCSVYWISL. At 220-222 the chain is on the lumenal side; sequence YKD. A helical membrane pass occupies residues 223–243; the sequence is VYVVSEIFDMIQYEVSPAIWV. The Cytoplasmic segment spans residues 244–273; the sequence is YSICHLLKQCTSVTTYENASKARFFRRMLN. A helical transmembrane segment spans residues 274 to 294; that stretch reads AFIFIFCASPMLHYLSNIIFG. The Lumenal segment spans residues 295–344; that stretch reads NFDYRLSVIIGDLFTFMEKIAFPCYIMFPTHNEALAYNRNVAEEAQEKMI.

It belongs to the UPF0742 family.

It is found in the endoplasmic reticulum. Its subcellular location is the membrane. This is an uncharacterized protein from Schizosaccharomyces pombe (strain 972 / ATCC 24843) (Fission yeast).